A 172-amino-acid chain; its full sequence is Peptide deformylase-like (172 aa).

Residue Glu134 is part of the active site.

This sequence belongs to the polypeptide deformylase family.

The sequence is that of Peptide deformylase-like from Rhizobium meliloti (strain 1021) (Ensifer meliloti).